The following is a 314-amino-acid chain: Coiled-coil domain-containing protein 42 like-2 (314 aa).

Coiled coils occupy residues Arg34 to Lys139 and Asn175 to Arg233.

This sequence belongs to the CFAP73 family.

The chain is Coiled-coil domain-containing protein 42 like-2 from Xenopus laevis (African clawed frog).